We begin with the raw amino-acid sequence, 287 residues long: U-megalopygitoxin(8)-Mo12 (287 aa).

The first 17 residues, 1 to 17, serve as a signal peptide directing secretion; sequence MNLQYLILSLLSTTVYG. His-284 is subject to Histidine amide.

This sequence belongs to the megalysin family. Post-translationally, contains 2 disulfide bonds. In terms of tissue distribution, expressed by the venom apparatus.

It is found in the secreted. The protein resides in the target cell membrane. In terms of biological role, may function as a large pore-forming protein. The chain is U-megalopygitoxin(8)-Mo12 from Megalopyge opercularis (Southern flannel moth).